A 328-amino-acid polypeptide reads, in one-letter code: Probable magnesium transporter NIPA6 (328 aa).

The Extracellular portion of the chain corresponds to 1 to 4 (METD). Residues 5–25 (NGKGLILAVASSVFIGSSFIL) traverse the membrane as a helical segment. Residues 26 to 51 (KKKGLKRAGAIGTRAGYGGYTYLLEP) are Cytoplasmic-facing. Residues 52–72 (LWWAGMVTMIVGEAANFVAYI) form a helical membrane-spanning segment. At 73-76 (YAPA) the chain is on the extracellular side. A helical transmembrane segment spans residues 77 to 97 (VLVTPLGALSIIISAVLAHFL). Over 98–104 (LKEKLKK) the chain is Cytoplasmic. The chain crosses the membrane as a helical span at residues 105 to 125 (MGVLGCVSCIVGSVVIVIHAP). The Extracellular segment spans residues 126–142 (KEQTPNSVEEIWNLATQ). A helical transmembrane segment spans residues 143 to 163 (PAFLIYVAITMSIVLALILHF). The Cytoplasmic portion of the chain corresponds to 164–175 (EPLCGQTNILVY). The chain crosses the membrane as a helical span at residues 176-196 (IGICSLMGALTVMSIKAIGIA). At 197–209 (IKLTMEGVSQIGY) the chain is on the extracellular side. The chain crosses the membrane as a helical span at residues 210–230 (PQTWLFVMVAVTCVVTQLIYL). The Cytoplasmic segment spans residues 231–240 (NKALDTFNAA). A helical transmembrane segment spans residues 241 to 261 (IVSPVYYVMFTTLTIVASAIM). The Extracellular portion of the chain corresponds to 262-269 (FKDWSGQD). The helical transmembrane segment at 270–290 (AASVASELCGFITVLTGTMIL) threads the bilayer. Over 291–328 (HGTREEEQQQASSEHVRWYDSRKSMNEEHLVSLYSPEY) the chain is Cytoplasmic.

The protein belongs to the NIPA (TC 2.A.7) family. In terms of assembly, homodimer.

It localises to the cell membrane. The protein localises to the early endosome. In terms of biological role, acts as a Mg(2+) transporter. Can also transport other divalent cations such as Fe(2+), Sr(2+), Ba(2+), Mn(2+) and Co(2+) but to a much less extent than Mg(2+). The sequence is that of Probable magnesium transporter NIPA6 from Arabidopsis thaliana (Mouse-ear cress).